A 371-amino-acid polypeptide reads, in one-letter code: Carnitine monooxygenase oxygenase subunit (371 aa).

In terms of domain architecture, Rieske spans 44–152 (WICVAHGSEL…VEEYAGFVFI (109 aa)). Positions 86, 88, 106, and 109 each coordinate [2Fe-2S] cluster. The Fe cation site is built by histidine 208, histidine 213, and aspartate 323.

This sequence belongs to the bacterial ring-hydroxylating dioxygenase alpha subunit family. CntA subfamily. Composed of an oxygenase subunit and a reductase subunit. The cofactor is [2Fe-2S] cluster. It depends on Fe cation as a cofactor.

The enzyme catalyses (R)-carnitine + NADH + O2 + H(+) = (3R)-3-hydroxy-4-oxobutanoate + trimethylamine + NAD(+) + H2O. It carries out the reaction (R)-carnitine + NADPH + O2 + H(+) = (3R)-3-hydroxy-4-oxobutanoate + trimethylamine + NADP(+) + H2O. Its pathway is amine and polyamine metabolism; carnitine metabolism. Its activity is regulated as follows. Inhibited by EDTA. In terms of biological role, converts carnitine to trimethylamine and malic semialdehyde. Acts on both enantiomers. This is Carnitine monooxygenase oxygenase subunit from Acinetobacter pittii (strain PHEA-2).